The sequence spans 86 residues: Progonadoliberin-2 (86 aa).

Residues M1–S24 form the signal peptide. Q25 carries the pyrrolidone carboxylic acid modification. The residue at position 34 (G34) is a Glycine amide.

The protein belongs to the GnRH family.

The protein resides in the secreted. Its function is as follows. Stimulates the secretion of gonadotropins. The sequence is that of Progonadoliberin-2 (gnrh2) from Clarias gariepinus (North African catfish).